A 203-amino-acid chain; its full sequence is Protein GrpE (203 aa).

Basic and acidic residues predominate over residues 1-20; it reads MSSKEQNVHEEQVSKEKEGM. The interval 1 to 38 is disordered; it reads MSSKEQNVHEEQVSKEKEGMESVMNESQEQVKSEDAQA.

Belongs to the GrpE family. As to quaternary structure, homodimer.

It is found in the cytoplasm. In terms of biological role, participates actively in the response to hyperosmotic and heat shock by preventing the aggregation of stress-denatured proteins, in association with DnaK and GrpE. It is the nucleotide exchange factor for DnaK and may function as a thermosensor. Unfolded proteins bind initially to DnaJ; upon interaction with the DnaJ-bound protein, DnaK hydrolyzes its bound ATP, resulting in the formation of a stable complex. GrpE releases ADP from DnaK; ATP binding to DnaK triggers the release of the substrate protein, thus completing the reaction cycle. Several rounds of ATP-dependent interactions between DnaJ, DnaK and GrpE are required for fully efficient folding. In Proteus mirabilis (strain HI4320), this protein is Protein GrpE.